We begin with the raw amino-acid sequence, 503 residues long: Maturase K (503 aa).

This sequence belongs to the intron maturase 2 family. MatK subfamily.

The protein localises to the plastid. It localises to the chloroplast. In terms of biological role, usually encoded in the trnK tRNA gene intron. Probably assists in splicing its own and other chloroplast group II introns. This is Maturase K from Rosa rugosa (Rugosa rose).